A 113-amino-acid polypeptide reads, in one-letter code: Flagellar hook-basal body complex protein FliE (113 aa).

The protein belongs to the FliE family.

Its subcellular location is the bacterial flagellum basal body. The polypeptide is Flagellar hook-basal body complex protein FliE (Rhizobium leguminosarum bv. trifolii (strain WSM2304)).